A 445-amino-acid polypeptide reads, in one-letter code: tRNA modification GTPase MnmE (445 aa).

(6S)-5-formyl-5,6,7,8-tetrahydrofolate-binding residues include arginine 20, glutamate 79, and lysine 119. The region spanning glycine 215–glutamate 371 is the TrmE-type G domain. Asparagine 225 lines the K(+) pocket. Residues asparagine 225 to serine 230, serine 244 to threonine 250, and aspartate 269 to glycine 272 each bind GTP. Mg(2+) is bound at residue serine 229. K(+) is bound by residues serine 244, isoleucine 246, and threonine 249. Threonine 250 lines the Mg(2+) pocket. Lysine 445 serves as a coordination point for (6S)-5-formyl-5,6,7,8-tetrahydrofolate.

The protein belongs to the TRAFAC class TrmE-Era-EngA-EngB-Septin-like GTPase superfamily. TrmE GTPase family. As to quaternary structure, homodimer. Heterotetramer of two MnmE and two MnmG subunits. It depends on K(+) as a cofactor.

Its subcellular location is the cytoplasm. In terms of biological role, exhibits a very high intrinsic GTPase hydrolysis rate. Involved in the addition of a carboxymethylaminomethyl (cmnm) group at the wobble position (U34) of certain tRNAs, forming tRNA-cmnm(5)s(2)U34. The protein is tRNA modification GTPase MnmE of Rickettsia conorii (strain ATCC VR-613 / Malish 7).